Reading from the N-terminus, the 540-residue chain is Alanine aminotransferase 2, mitochondrial (540 aa).

A mitochondrion-targeting transit peptide spans 1–46; it reads MRRFLINQAKGLVDHSRRQHHHKSPSFLSPQPRPLASSPPALSRFF. Residues 11-40 are disordered; it reads GLVDHSRRQHHHKSPSFLSPQPRPLASSPP. Positions 28–40 are enriched in low complexity; sequence LSPQPRPLASSPP. Residue Lys357 is modified to N6-(pyridoxal phosphate)lysine.

The protein belongs to the class-I pyridoxal-phosphate-dependent aminotransferase family. Alanine aminotransferase subfamily. Homodimer. The cofactor is pyridoxal 5'-phosphate. Post-translationally, the N-terminus is blocked. In terms of tissue distribution, expressed in shoots, essentially in leaves and flowers, mostly in vascular tissues. Also detected in stems and roots.

It is found in the mitochondrion. The enzyme catalyses L-alanine + 2-oxoglutarate = pyruvate + L-glutamate. It functions in the pathway photosynthesis; C4 acid pathway. Its pathway is amino-acid degradation; L-alanine degradation via transaminase pathway; pyruvate from L-alanine: step 1/1. The chain is Alanine aminotransferase 2, mitochondrial (ALAAT2) from Arabidopsis thaliana (Mouse-ear cress).